A 330-amino-acid chain; its full sequence is Probable cytosolic iron-sulfur protein assembly protein ciao1 (330 aa).

7 WD repeats span residues 14–53 (HPDS…WECK), 59–98 (GHQR…FECL), 103–142 (GHEN…EYEC), 148–187 (SHTQ…WECR), 192–231 (GHES…DGSS), 244–283 (FHGR…DPEQ), and 295–330 (AHNQ…YNSA).

This sequence belongs to the WD repeat CIA1 family. As to quaternary structure, component of the CIA complex.

Its function is as follows. Key component of the cytosolic iron-sulfur protein assembly (CIA) complex, a multiprotein complex that mediates the incorporation of iron-sulfur cluster into extramitochondrial Fe/S proteins. The chain is Probable cytosolic iron-sulfur protein assembly protein ciao1 (ciao1) from Danio rerio (Zebrafish).